Consider the following 205-residue polypeptide: Type-4 uracil-DNA glycosylase (205 aa).

2 residues coordinate [4Fe-4S] cluster: C13 and C16. Uracil contacts are provided by residues 40–42, F54, and N80; that span reads GEG. [4Fe-4S] cluster is bound by residues C84 and C100. H155 lines the uracil pocket.

The protein belongs to the uracil-DNA glycosylase (UDG) superfamily. Type 4 (UDGa) family. Monomer.

It catalyses the reaction Hydrolyzes single-stranded DNA or mismatched double-stranded DNA and polynucleotides, releasing free uracil.. With respect to regulation, product-inhibited by apurinic/apyrimidinic sites. In terms of biological role, removes uracil bases that are present in DNA as a result of either deamination of cytosine or misincorporation of dUMP instead of dTMP. Can remove uracil from double-stranded DNA containing either a U/G, U/A, U/C or U/T base pair as well as from single-stranded DNA. Specifically recognizes uracil that is flipped out from double-stranded DNA. The sequence is that of Type-4 uracil-DNA glycosylase from Thermus thermophilus (strain ATCC 27634 / DSM 579 / HB8).